The sequence spans 155 residues: Immunoglobulin domain-containing protein oig-4 (155 aa).

Positions 1–22 (MSFRLWGRCIFFFCFLLEAIDS) are cleaved as a signal peptide. N-linked (GlcNAc...) asparagine glycans are attached at residues asparagine 55 and asparagine 114. The 82-residue stretch at 73 to 154 (GYKLLIICKA…MAKNFKAEYT (82 aa)) folds into the Ig-like C2-type domain. A disulfide bridge links cysteine 80 with cysteine 136.

In terms of assembly, interacts with the non-alpha subunit of nicotinic acetylcholine receptor unc-29 and lev-10 to stabilize the complex formed between unc-29 and lev-10. In terms of tissue distribution, expressed in body wall muscle cells, the pharyngeal muscle cell pm6 and in four head neurons.

Its subcellular location is the synapse. It localises to the secreted. Its function is as follows. Required for the localization of acetylcholine receptors at neuromuscular junctions and for subsequently controlling the response evoked by receptor stimulation. The protein is Immunoglobulin domain-containing protein oig-4 of Caenorhabditis elegans.